We begin with the raw amino-acid sequence, 144 residues long: MKTFSPTPKDINRQWFVVDAQDQVLGRLASQIAHRLRGKHKPEFAPHMDNGDFIVVVNCEKIKVTGNKLADKKYYRHSGWVGGLKTTILGDVLADKPSRALMAAVKGMLPKNRLGRAMLKKLKIYAGPEHPHTAQNPQPLTLPH.

This sequence belongs to the universal ribosomal protein uL13 family. As to quaternary structure, part of the 50S ribosomal subunit.

Its function is as follows. This protein is one of the early assembly proteins of the 50S ribosomal subunit, although it is not seen to bind rRNA by itself. It is important during the early stages of 50S assembly. The polypeptide is Large ribosomal subunit protein uL13 (Desulfovibrio desulfuricans (strain ATCC 27774 / DSM 6949 / MB)).